Reading from the N-terminus, the 917-residue chain is Spermatogenesis-associated protein 31D3 (917 aa).

The chain crosses the membrane as a helical span at residues 29–49 (FICLSGLGLFILYLFYMVLTL). Disordered regions lie at residues 55–80 (EKNN…KDRK), 152–195 (SVSP…PPPL), and 773–797 (SQET…LRSN). The span at 63-74 (HQGRARRKRKSV) shows a compositional bias: basic residues. Residues 152–163 (SVSPLASSASGA) show a composition bias toward low complexity. Residues 164 to 177 (ESSFTLASTPSATT) are compositionally biased toward polar residues. The segment covering 782–797 (LLHDPETSSEEDLRSN) has biased composition (basic and acidic residues).

It belongs to the SPATA31 family.

It localises to the membrane. Functionally, may play a role in spermatogenesis. The chain is Spermatogenesis-associated protein 31D3 (SPATA31D3) from Homo sapiens (Human).